We begin with the raw amino-acid sequence, 233 residues long: U2 small nuclear ribonucleoprotein A' (233 aa).

LRR repeat units lie at residues 20–40 (KLTLLLRDLQITELENLAITQ), 42–63 (KYQVIDLSNNDLISLGNIPKRF), 65–86 (NLQCLLLSNNNISYIDDESFPS), and 89–110 (HITSITLFNNNIYQFQKSFKDK). The region spanning 122 to 160 (NPITEMENYRYFIIWLIPSLKVLDFKKVKQAERKTSEDM) is the LRRCT domain.

The protein belongs to the U2 small nuclear ribonucleoprotein A family. In terms of assembly, associated with the spliceosome.

The protein resides in the nucleus. In terms of biological role, involved in pre-mRNA splicing. The protein is U2 small nuclear ribonucleoprotein A' (LEA1) of Candida albicans (strain SC5314 / ATCC MYA-2876) (Yeast).